The following is a 1096-amino-acid chain: DNA-directed RNA polymerase subunit beta (1096 aa).

Positions 1069 to 1096 (DLMQDVNPRRSTPSRPTYESLGSDYQED) are disordered.

The protein belongs to the RNA polymerase beta chain family. In terms of assembly, in cyanobacteria the RNAP catalytic core is composed of 2 alpha, 1 beta, 1 beta', 1 gamma and 1 omega subunit. When a sigma factor is associated with the core the holoenzyme is formed, which can initiate transcription.

It carries out the reaction RNA(n) + a ribonucleoside 5'-triphosphate = RNA(n+1) + diphosphate. Functionally, DNA-dependent RNA polymerase catalyzes the transcription of DNA into RNA using the four ribonucleoside triphosphates as substrates. This chain is DNA-directed RNA polymerase subunit beta, found in Prochlorococcus marinus (strain SARG / CCMP1375 / SS120).